The sequence spans 157 residues: Short-type peptidyl-prolyl cis-trans isomerase (157 aa).

Positions 1–95 (MINLIKKGDY…RDERLIQEIP (95 aa)) constitute a PPIase FKBP-type domain. The segment at 86 to 137 (RDERLIQEIPKEMFADADFEPQEGMLILASGIPAKIIKVTDDTVTLDFNHEL) is IF.

It belongs to the FKBP-type PPIase family.

It is found in the cytoplasm. It carries out the reaction [protein]-peptidylproline (omega=180) = [protein]-peptidylproline (omega=0). Its function is as follows. Catalyzes the cis-trans isomerization of peptidyl prolyl bonds and accelerates protein folding. Also exhibits chaperone-like activity. This is Short-type peptidyl-prolyl cis-trans isomerase from Methanocaldococcus jannaschii (strain ATCC 43067 / DSM 2661 / JAL-1 / JCM 10045 / NBRC 100440) (Methanococcus jannaschii).